The sequence spans 162 residues: Shikimate kinase (162 aa).

10–15 (GAGKST) provides a ligand contact to ATP. S14 serves as a coordination point for Mg(2+). Substrate-binding residues include D28, R52, and G73. R113 provides a ligand contact to ATP. R129 provides a ligand contact to substrate.

This sequence belongs to the shikimate kinase family. As to quaternary structure, monomer. The cofactor is Mg(2+).

It localises to the cytoplasm. The enzyme catalyses shikimate + ATP = 3-phosphoshikimate + ADP + H(+). The protein operates within metabolic intermediate biosynthesis; chorismate biosynthesis; chorismate from D-erythrose 4-phosphate and phosphoenolpyruvate: step 5/7. Functionally, catalyzes the specific phosphorylation of the 3-hydroxyl group of shikimic acid using ATP as a cosubstrate. This Lactococcus lactis subsp. cremoris (strain MG1363) protein is Shikimate kinase.